The sequence spans 296 residues: Cytidine deaminase (296 aa).

2 CMP/dCMP-type deaminase domains span residues 48–168 (DADA…FGPV) and 187–296 (QNMN…FIEE). Position 89 to 91 (89 to 91 (NME)) interacts with substrate. Residue His102 coordinates Zn(2+). Residue Glu104 is the Proton donor of the active site. Residues Cys129 and Cys132 each coordinate Zn(2+).

The protein belongs to the cytidine and deoxycytidylate deaminase family. Homodimer. It depends on Zn(2+) as a cofactor.

The catalysed reaction is cytidine + H2O + H(+) = uridine + NH4(+). The enzyme catalyses 2'-deoxycytidine + H2O + H(+) = 2'-deoxyuridine + NH4(+). Functionally, this enzyme scavenges exogenous and endogenous cytidine and 2'-deoxycytidine for UMP synthesis. The polypeptide is Cytidine deaminase (Pectobacterium carotovorum subsp. carotovorum (strain PC1)).